Reading from the N-terminus, the 107-residue chain is Nucleoid-associated protein HNE_0371 (107 aa).

This sequence belongs to the YbaB/EbfC family. Homodimer.

It localises to the cytoplasm. The protein localises to the nucleoid. Functionally, binds to DNA and alters its conformation. May be involved in regulation of gene expression, nucleoid organization and DNA protection. The sequence is that of Nucleoid-associated protein HNE_0371 from Hyphomonas neptunium (strain ATCC 15444).